The sequence spans 1179 residues: Dynein axonemal assembly factor 9 (1179 aa).

In terms of assembly, interacts with ARL3.

Functionally, may act as an effector for ARL3. In Mus musculus (Mouse), this protein is Dynein axonemal assembly factor 9.